Consider the following 152-residue polypeptide: Large ribosomal subunit protein bL9 (152 aa).

The protein belongs to the bacterial ribosomal protein bL9 family.

Its function is as follows. Binds to the 23S rRNA. The polypeptide is Large ribosomal subunit protein bL9 (Trichormus variabilis (strain ATCC 29413 / PCC 7937) (Anabaena variabilis)).